The following is a 65-amino-acid chain: MAEKKGKTVTVEQIGSPIRRPAEQRATLIGLGLNKMHRRSTLEDTPAVRGMIAKLPHLVRVVDEA.

It belongs to the universal ribosomal protein uL30 family. As to quaternary structure, part of the 50S ribosomal subunit.

The protein is Large ribosomal subunit protein uL30 of Brucella suis (strain ATCC 23445 / NCTC 10510).